The following is a 371-amino-acid chain: Fe(3+) ions import ATP-binding protein FbpC (371 aa).

The region spanning 5-235 (IKIENAQKRY…PANLFVATFI (231 aa)) is the ABC transporter domain. ATP is bound at residue 37–44 (GPSGCGKT).

It belongs to the ABC transporter superfamily. Fe(3+) ion importer (TC 3.A.1.10) family. The complex is composed of two ATP-binding proteins (FbpC), two transmembrane proteins (FbpB) and a solute-binding protein (FbpA).

Its subcellular location is the cell inner membrane. The catalysed reaction is Fe(3+)(out) + ATP + H2O = Fe(3+)(in) + ADP + phosphate + H(+). Part of the ABC transporter complex FbpABC involved in Fe(3+) ions import. Responsible for energy coupling to the transport system. The sequence is that of Fe(3+) ions import ATP-binding protein FbpC from Fusobacterium nucleatum subsp. nucleatum (strain ATCC 25586 / DSM 15643 / BCRC 10681 / CIP 101130 / JCM 8532 / KCTC 2640 / LMG 13131 / VPI 4355).